The sequence spans 109 residues: Large ribosomal subunit protein uL24 (109 aa).

It belongs to the universal ribosomal protein uL24 family. Part of the 50S ribosomal subunit.

Functionally, one of two assembly initiator proteins, it binds directly to the 5'-end of the 23S rRNA, where it nucleates assembly of the 50S subunit. Its function is as follows. One of the proteins that surrounds the polypeptide exit tunnel on the outside of the subunit. The sequence is that of Large ribosomal subunit protein uL24 from Geotalea uraniireducens (strain Rf4) (Geobacter uraniireducens).